Consider the following 315-residue polypeptide: HTH-type transcriptional regulator TreR (315 aa).

Residues 5-59 form the HTH lacI-type domain; sequence LTIKDIARLSGVGKSTVSRVLNNESGVSERTRERVEAVMNQHGFSPSRSARAMRG. Residues 7 to 26 constitute a DNA-binding region (H-T-H motif); that stretch reads IKDIARLSGVGKSTVSRVLN. Residues 71–77, glycine 126, arginine 147, 187–190, arginine 194, threonine 242, and tyrosine 284 contribute to the alpha,alpha-trehalose 6-phosphate site; these read RLDSLSE and DITT.

In terms of assembly, homodimer.

Repressor of the treBC operon. It is able to bind trehalose-6-phosphate. The protein is HTH-type transcriptional regulator TreR (treR) of Salmonella typhimurium (strain LT2 / SGSC1412 / ATCC 700720).